The following is a 56-amino-acid chain: Chymotrypsin inhibitor (56 aa).

Disulfide bonds link cysteine 3/cysteine 36, cysteine 12/cysteine 32, cysteine 16/cysteine 28, cysteine 20/cysteine 56, and cysteine 38/cysteine 50. The region spanning cysteine 3 to cysteine 56 is the TIL domain.

This sequence belongs to the serine protease inhibitor-like (TIL domain-containing) family.

The protein resides in the secreted. Its function is as follows. Chymotrypsin and cathepsin G inhibitor. This is Chymotrypsin inhibitor from Apis mellifera (Honeybee).